The chain runs to 87 residues: uncharacterized protein (87 aa).

Residues 67 to 87 form a disordered region; it reads TGGDPREAVVRPADQVEGYTG.

This is an uncharacterized protein from Mycobacterium bovis (strain ATCC BAA-935 / AF2122/97).